The primary structure comprises 344 residues: S-adenosylmethionine:tRNA ribosyltransferase-isomerase (344 aa).

Belongs to the QueA family. In terms of assembly, monomer.

The protein resides in the cytoplasm. The catalysed reaction is 7-aminomethyl-7-carbaguanosine(34) in tRNA + S-adenosyl-L-methionine = epoxyqueuosine(34) in tRNA + adenine + L-methionine + 2 H(+). It participates in tRNA modification; tRNA-queuosine biosynthesis. Functionally, transfers and isomerizes the ribose moiety from AdoMet to the 7-aminomethyl group of 7-deazaguanine (preQ1-tRNA) to give epoxyqueuosine (oQ-tRNA). The sequence is that of S-adenosylmethionine:tRNA ribosyltransferase-isomerase from Levilactobacillus brevis (strain ATCC 367 / BCRC 12310 / CIP 105137 / JCM 1170 / LMG 11437 / NCIMB 947 / NCTC 947) (Lactobacillus brevis).